A 420-amino-acid chain; its full sequence is Vitellogenin-3 (420 aa).

A signal peptide spans 1–19 (MMSLRICLLATCLLVAAHA). Position 37 is a phosphothreonine (Thr37). 2 positions are modified to phosphoserine: Ser177 and Ser178. Tyr384 and Tyr390 each carry sulfotyrosine. A disordered region spans residues 401–420 (GQRSPAHKQAAYHGMHHAQN).

It belongs to the AB hydrolase superfamily. Lipase family. Post-translationally, tyrosine sulfation occurs in the female only and plays an essential functional role. Synthesized in the fat body and ovarian follicle cells and accumulate in the oocyte.

It is found in the secreted. Vitellogenin is the major yolk protein of eggs where it is used as a food source during embryogenesis. Vitellogenins and their receptor yl/yolkless are required for maintenance of microtubule plus-end orientation towards the posterior pole of oocytes. Involved in polarized localization of germ plasm components, such as osk mRNA and vas protein, to the oocyte posterior cortex. Receptor-mediated endocytosis by yl/yolkless is crucial for actin reorganization, mediated by osk isoform A/Long, required to anchor germ plasm components to the oocyte cortex. This Drosophila melanogaster (Fruit fly) protein is Vitellogenin-3 (Yp3).